Reading from the N-terminus, the 307-residue chain is Transcription factor DIVARICATA (307 aa).

An SANT domain is found at 21 to 74 (RSTTRWTAAENKAFENALAVFDENTPNRWERVAERVPGKTVGDVMRQYKELEDD). A disordered region spans residues 109 to 133 (QSYGTGGRKSSSGRPSEQERKKGVP). The span at 124-133 (SEQERKKGVP) shows a compositional bias: basic and acidic residues. Positions 126 to 182 (QERKKGVPWTEEEHKLFLMGLKKYGKGDWRNISRNFVITRTPTQVASHAQKYFIRQL) constitute an HTH myb-type domain. The H-T-H motif DNA-binding region spans 154–178 (WRNISRNFVITRTPTQVASHAQKYF). Composition is skewed to polar residues over residues 196-206 (ITTVNLSDNQT) and 222-231 (MAQQQTSSTS). Positions 196–231 (ITTVNLSDNQTPSPDNKKPPSSPDHSMAQQQTSSTS) are disordered.

It is found in the nucleus. Involved in the dorsovental asymmetry of flowers. Promotes ventral identity. The sequence is that of Transcription factor DIVARICATA (DIVARICATA) from Antirrhinum majus (Garden snapdragon).